Here is a 1062-residue protein sequence, read N- to C-terminus: Translation initiation factor IF-2 (1062 aa).

The disordered stretch occupies residues 34–463; it reads SASSTVEAPV…RMGAMVPRGN (430 aa). The span at 76-121 shows a compositional bias: pro residues; sequence PTPPSRPGLAPRPGPRPVPGRPGPLGRPGPATPAPSPSPASPPLPA. Over residues 122–153 the composition is skewed to low complexity; sequence SPVQASPVQASPVQASPTSAPAAPRPAAASAV. Residues 154–178 are compositionally biased toward pro residues; the sequence is PAPPMPSVPSAPSGPRPGPNAPRPG. Residues 198 to 214 are compositionally biased toward gly residues; the sequence is TAGGPTAGGPTAGGPTA. The segment covering 294-305 has biased composition (pro residues); sequence RPTPGGMPPRPG. 2 stretches are compositionally biased toward gly residues: residues 307–324 and 344–430; these read PRSGAGGGMPPRPGGTGG and PGGG…GGRG. The span at 431 to 442 shows a compositional bias: basic residues; sequence RPGRQRKSKRAK. In terms of domain architecture, tr-type G spans 555–727; sequence SRPPVVTVMG…IVLTADASLD (173 aa). The interval 564-571 is G1; it reads GHVDHGKT. A GTP-binding site is contributed by 564 to 571; it reads GHVDHGKT. The G2 stretch occupies residues 589-593; that stretch reads GITQH. Residues 614–617 are G3; sequence DTPG. GTP contacts are provided by residues 614–618 and 668–671; these read DTPGH and NKVD. The tract at residues 668-671 is G4; the sequence is NKVD. A G5 region spans residues 704-706; that stretch reads SAR.

Belongs to the TRAFAC class translation factor GTPase superfamily. Classic translation factor GTPase family. IF-2 subfamily.

The protein localises to the cytoplasm. Its function is as follows. One of the essential components for the initiation of protein synthesis. Protects formylmethionyl-tRNA from spontaneous hydrolysis and promotes its binding to the 30S ribosomal subunits. Also involved in the hydrolysis of GTP during the formation of the 70S ribosomal complex. The chain is Translation initiation factor IF-2 from Frankia casuarinae (strain DSM 45818 / CECT 9043 / HFP020203 / CcI3).